Reading from the N-terminus, the 545-residue chain is Ribulokinase (545 aa).

Belongs to the ribulokinase family.

The enzyme catalyses D-ribulose + ATP = D-ribulose 5-phosphate + ADP + H(+). The catalysed reaction is L-ribulose + ATP = L-ribulose 5-phosphate + ADP + H(+). It participates in carbohydrate degradation; L-arabinose degradation via L-ribulose; D-xylulose 5-phosphate from L-arabinose (bacterial route): step 2/3. This is Ribulokinase from Staphylococcus aureus (strain MSSA476).